Consider the following 195-residue polypeptide: Cysteine/O-acetylserine efflux protein (195 aa).

The next 5 helical transmembrane spans lie at 47 to 67 (SLGF…LAVI), 70 to 90 (AAVH…AWKI), 105 to 125 (ISFW…LYGV), 142 to 162 (VVGV…CWAL), and 177 to 194 (QLNI…VRIF).

It belongs to the Rht family.

The protein localises to the cell inner membrane. It carries out the reaction O-acetyl-L-serine(in) = O-acetyl-L-serine(out). The enzyme catalyses L-cysteine(in) = L-cysteine(out). In terms of biological role, exporter of O-acetylserine (OAS) and cysteine. This is Cysteine/O-acetylserine efflux protein (eamB) from Shigella boydii serotype 4 (strain Sb227).